The chain runs to 452 residues: Exodeoxyribonuclease 7 large subunit (452 aa).

Belongs to the XseA family. Heterooligomer composed of large and small subunits.

The protein localises to the cytoplasm. It carries out the reaction Exonucleolytic cleavage in either 5'- to 3'- or 3'- to 5'-direction to yield nucleoside 5'-phosphates.. In terms of biological role, bidirectionally degrades single-stranded DNA into large acid-insoluble oligonucleotides, which are then degraded further into small acid-soluble oligonucleotides. The sequence is that of Exodeoxyribonuclease 7 large subunit from Lysinibacillus sphaericus (strain C3-41).